Consider the following 378-residue polypeptide: Spermidine/putrescine import ATP-binding protein PotA (378 aa).

An ABC transporter domain is found at 18 to 248 (VQLAGIRKCF…PKNLFVAGFI (231 aa)). 50–57 (GPSGCGKT) contributes to the ATP binding site.

It belongs to the ABC transporter superfamily. Spermidine/putrescine importer (TC 3.A.1.11.1) family. In terms of assembly, the complex is composed of two ATP-binding proteins (PotA), two transmembrane proteins (PotB and PotC) and a solute-binding protein (PotD).

It is found in the cell inner membrane. It catalyses the reaction ATP + H2O + polyamine-[polyamine-binding protein]Side 1 = ADP + phosphate + polyamineSide 2 + [polyamine-binding protein]Side 1.. Functionally, part of the ABC transporter complex PotABCD involved in spermidine/putrescine import. Responsible for energy coupling to the transport system. This is Spermidine/putrescine import ATP-binding protein PotA from Shigella boydii serotype 4 (strain Sb227).